The following is a 249-amino-acid chain: Small ribosomal subunit protein uS2 (249 aa).

Belongs to the universal ribosomal protein uS2 family.

This Polynucleobacter necessarius subsp. necessarius (strain STIR1) protein is Small ribosomal subunit protein uS2.